A 205-amino-acid chain; its full sequence is ATP-dependent Clp protease proteolytic subunit (205 aa).

The active-site Nucleophile is the Ser-108. Residue His-133 is part of the active site.

Belongs to the peptidase S14 family. Fourteen ClpP subunits assemble into 2 heptameric rings which stack back to back to give a disk-like structure with a central cavity, resembling the structure of eukaryotic proteasomes.

The protein localises to the cytoplasm. The enzyme catalyses Hydrolysis of proteins to small peptides in the presence of ATP and magnesium. alpha-casein is the usual test substrate. In the absence of ATP, only oligopeptides shorter than five residues are hydrolyzed (such as succinyl-Leu-Tyr-|-NHMec, and Leu-Tyr-Leu-|-Tyr-Trp, in which cleavage of the -Tyr-|-Leu- and -Tyr-|-Trp bonds also occurs).. Functionally, cleaves peptides in various proteins in a process that requires ATP hydrolysis. Has a chymotrypsin-like activity. Plays a major role in the degradation of misfolded proteins. The polypeptide is ATP-dependent Clp protease proteolytic subunit (Alcanivorax borkumensis (strain ATCC 700651 / DSM 11573 / NCIMB 13689 / SK2)).